Reading from the N-terminus, the 931-residue chain is NEDD4-binding protein 1 (931 aa).

Positions 75–159 (GKAVRSAKEY…VQQFVKLFEN (85 aa)) constitute a KH-like domain. 3 disordered regions span residues 289–329 (MTSK…HNDS), 413–474 (QEWS…TQVD), and 547–571 (CTSAKSKTAVHQKSAGPSPVQNSHS). Composition is skewed to basic and acidic residues over residues 290 to 309 (TSKERQSCKRRFSDAEESLP) and 319 to 329 (QEVKSVSHNDS). Polar residues predominate over residues 416-434 (SSKTPKTTNLRLGSNANSS). Composition is skewed to basic and acidic residues over residues 435-444 (HKLEDEDISC) and 456-467 (NETRTERHKARD). Positions 547–557 (CTSAKSKTAVH) are enriched in polar residues. The 153-residue stretch at 659–811 (LKHIIIDGSN…LGRNGPRLDD (153 aa)) folds into the RNase NYN domain. Residues 841-863 (LFMHVPNPASSSQQPKNRAHGDH) are disordered. The tract at residues 884-931 (RSASETVWLREALIKIFPDYEQRQKIDKILADHPFMRDLNALSAMVLD) is coCUN.

The protein belongs to the N4BP1 family.

It is found in the cytoplasm. The protein localises to the cytosol. The protein resides in the nucleus. It localises to the nucleolus. Its subcellular location is the PML body. Functionally, potent suppressor of cytokine production that acts as a regulator of innate immune signaling and inflammation. Acts as a key negative regulator of select cytokine and chemokine responses elicited by TRIF-independent Toll-like receptors (TLRs), thereby limiting inflammatory cytokine responses to minor insults. Has ribonuclease activity. This Gallus gallus (Chicken) protein is NEDD4-binding protein 1.